Here is a 186-residue protein sequence, read N- to C-terminus: Large ribosomal subunit protein uL16 (186 aa).

It belongs to the universal ribosomal protein uL16 family.

This chain is Large ribosomal subunit protein uL16, found in Nanoarchaeum equitans (strain Kin4-M).